Here is a 499-residue protein sequence, read N- to C-terminus: Putative alpha-galactosidase 8 (499 aa).

N-linked (GlcNAc...) asparagine glycosylation is found at asparagine 154 and asparagine 191. Residue aspartate 238 is the Nucleophile of the active site. A glycan (N-linked (GlcNAc...) asparagine) is linked at asparagine 256. Aspartate 303 (proton donor) is an active-site residue.

The protein belongs to the glycosyl hydrolase 27 family.

It is found in the secreted. It carries out the reaction Hydrolysis of terminal, non-reducing alpha-D-galactose residues in alpha-D-galactosides, including galactose oligosaccharides, galactomannans and galactolipids.. Its function is as follows. Putative alpha-galactosidase involved in the degradation of simple oligosaccharides like melibiose, raffinose and stachyose, and of polymeric galacto(gluco)mannans. The polypeptide is Putative alpha-galactosidase 8 (agl8) (Emericella nidulans (strain FGSC A4 / ATCC 38163 / CBS 112.46 / NRRL 194 / M139) (Aspergillus nidulans)).